The following is a 411-amino-acid chain: Class E basic helix-loop-helix protein 40 (411 aa).

A disordered region spans residues 1–20; sequence MERIPSAQPPPTCLPKAPGL. Residues 1 to 139 are essential for interaction with BMAL1, E-box binding and repressor activity against the CLOCK-BMAL1 heterodimer; it reads MERIPSAQPP…LSGRNLEAGQ (139 aa). Positions 52-107 constitute a bHLH domain; that stretch reads TYKLPHRLIEKKRRDRINECIAQLKDLLPEHLKLTTLGHLEKAVVLELTLKHVKAL. The segment at 75-79 is necessary for interaction with RXRA and repressor activity against RXRA; the sequence is LKDLL. The region spanning 142-175 is the Orange domain; it reads FCSGFQTCAREVLQYLAKHENTRDLKSSQLVTHL. Residue Lys-159 forms a Glycyl lysine isopeptide (Lys-Gly) (interchain with G-Cter in SUMO1, SUMO2 and SUMO3) linkage. A Glycyl lysine isopeptide (Lys-Gly) (interchain with G-Cter in SUMO2) cross-link involves residue Lys-167. A disordered region spans residues 227 to 294; the sequence is FAPSGGEQSG…PPTKKSRMQL (68 aa). Position 235 is a phosphoserine (Ser-235). Residues 248-271 show a composition bias toward basic and acidic residues; it reads ELEKGDLRSEQPYFKSDHGRRFAV. A Glycyl lysine isopeptide (Lys-Gly) (interchain with G-Cter in SUMO1); alternate cross-link involves residue Lys-279. Lys-279 is covalently cross-linked (Glycyl lysine isopeptide (Lys-Gly) (interchain with G-Cter in SUMO1, SUMO2 and SUMO3); alternate). Lys-279 participates in a covalent cross-link: Glycyl lysine isopeptide (Lys-Gly) (interchain with G-Cter in SUMO2); alternate. Lys-288 is covalently cross-linked (Glycyl lysine isopeptide (Lys-Gly) (interchain with G-Cter in SUMO2)). Ser-383 carries the post-translational modification Phosphoserine.

As to quaternary structure, homodimer. Heterodimer with BHLHE41/DEC2. Interacts with ubiquitin-conjugating enzyme UBE2I/UBC9. Interacts with HDAC1, SUMO1, RXRA and BMAL1. Interacts with TCF3/E47. Ubiquitinated; which may lead to proteasomal degradation. In terms of processing, sumoylation inhibits its ubiquitination and promotes its negative regulation of the CLOCK-BMAL1 heterodimer transcriptional activator activity.

Its subcellular location is the cytoplasm. The protein localises to the nucleus. In terms of biological role, transcriptional repressor involved in the regulation of the circadian rhythm by negatively regulating the activity of the clock genes and clock-controlled genes. Acts as the negative limb of a novel autoregulatory feedback loop (DEC loop) which differs from the one formed by the PER and CRY transcriptional repressors (PER/CRY loop). Both these loops are interlocked as it represses the expression of PER1/2 and in turn is repressed by PER1/2 and CRY1/2. Represses the activity of the circadian transcriptional activator: CLOCK-BMAL1|BMAL2 heterodimer by competing for the binding to E-box elements (5'-CACGTG-3') found within the promoters of its target genes. Negatively regulates its own expression and the expression of DBP and BHLHE41/DEC2. Acts as a corepressor of RXR and the RXR-LXR heterodimers and represses the ligand-induced RXRA and NR1H3/LXRA transactivation activity. May function as a transcriptional factor for neuronal differentiation. Represses the transcription of NR0B2 and attentuates the transactivation of NR0B2 by the CLOCK-BMAL1 complex. Drives the circadian rhythm of blood pressure through transcriptional repression of ATP1B1 in the cardiovascular system. The polypeptide is Class E basic helix-loop-helix protein 40 (Bhlhe40) (Mus musculus (Mouse)).